We begin with the raw amino-acid sequence, 376 residues long: DNA repair protein RAD51 homolog 3 (376 aa).

A required for Holliday junction resolution activity region spans residues 1-126; sequence MRGKTFRFEM…LMKTTEICGA (126 aa). At S20 the chain carries Phosphoserine. The interaction with RAD51B, RAD51D and XRCC3 stretch occupies residues 79–136; the sequence is SESHKKCTALELLEQEHTQGFIITFCSALDDILGGGVPLMKTTEICGAPGVGKTQLCM. 125–132 lines the ATP pocket; the sequence is GAPGVGKT. The Nuclear localization signal signature appears at 366–370; it reads RKRSR.

The protein belongs to the RecA family. RAD51 subfamily. Part of the RAD51 paralog protein complexes BCDX2 and CX3; the complexes have a ring-like structure arranged into a flat disc around a central channel. The BCDX2 complex consits of RAD51B, RAD51C, RAD51D and XRCC2; the CX3 complex consists of RAD51C and XRCC3. The BCDX2 subcomplex RAD51B:RAD51C interacts with RAD51. Interacts with SWSAP1; involved in homologous recombination repair. Interacts directly with PALB2 which may serve as a scaffold for a HR complex containing PALB2, BRCA2, RAD51C, RAD51 and XRCC3. Interacts with HELQ. Interacts with DNA damage up-regulated protein DDUP. In terms of tissue distribution, expressed in a variety of tissues, with highest expression in testis, heart muscle, spleen and prostate.

It localises to the nucleus. It is found in the cytoplasm. The protein localises to the perinuclear region. The protein resides in the mitochondrion. Its function is as follows. Essential for the homologous recombination (HR) pathway of DNA repair. Involved in the homologous recombination repair (HRR) pathway of double-stranded DNA breaks arising during DNA replication or induced by DNA-damaging agents. Part of the RAD51 paralog protein complexes BCDX2 and CX3 which act at different stages of the BRCA1-BRCA2-dependent HR pathway. Upon DNA damage, BCDX2 seems to act downstream of BRCA2 recruitment and upstream of RAD51 recruitment; CX3 seems to act downstream of RAD51 recruitment; both complexes bind predominantly to the intersection of the four duplex arms of the Holliday junction (HJ) and to junction of replication forks. The BCDX2 complex was originally reported to bind single-stranded DNA, single-stranded gaps in duplex DNA and specifically to nicks in duplex DNA. The BCDX2 subcomplex RAD51B:RAD51C exhibits single-stranded DNA-dependent ATPase activity suggesting an involvement in early stages of the HR pathway. Involved in RAD51 foci formation in response to DNA damage suggesting an involvement in early stages of HR probably in the invasion step. Has an early function in DNA repair in facilitating phosphorylation of the checkpoint kinase CHEK2 and thereby transduction of the damage signal, leading to cell cycle arrest and HR activation. Participates in branch migration and HJ resolution and thus is important for processing HR intermediates late in the DNA repair process; the function may be linked to the CX3 complex. Part of a PALB2-scaffolded HR complex containing BRCA2 and which is thought to play a role in DNA repair by HR. Protects RAD51 from ubiquitin-mediated degradation that is enhanced following DNA damage. Plays a role in regulating mitochondrial DNA copy number under conditions of oxidative stress in the presence of RAD51 and XRCC3. Contributes to DNA cross-link resistance, sister chromatid cohesion and genomic stability. Involved in maintaining centrosome number in mitosis. The polypeptide is DNA repair protein RAD51 homolog 3 (RAD51C) (Homo sapiens (Human)).